The sequence spans 84 residues: Putative movement protein (84 aa).

The helical transmembrane segment at A15–A35 threads the bilayer.

Interacts with the capsid protein (CP). Part of a MP-CP-viral DNA complex.

The protein localises to the host membrane. Functionally, involved in the viral transport within, and between cells. In Miscanthus streak virus (isolate 91) (MiSV), this protein is Putative movement protein.